Consider the following 325-residue polypeptide: MFNSEIKEKYLDTLSEGMVMQMRPIFAKAEITETLYNKDIYDFTSMQILELIRSFDQTTIGSVRRTLALLSLYIDWAISYKLSKGLTNLARTISEEELYECLGDKKLYITYSELEEMENQLVNYQSKAVLRLLFEGVSGLAHSELLSLTKKQVEDAMLNGNVLTLYDSKHGERKLKVSSECLVIALNAAQETKYKLKNGKAKGQTKEVFLVENDYVVKTKRTSNKGDGQASKFVITNLITDISEFFKINFLTPNTIVRSGHLYRAYQLYKEKGVIDNSVRYQIIDDFNLRVKSKYRAVYSMQDYINEEEVNKYYAEELGLKETTI.

This chain is SPbeta prophage-derived uncharacterized protein YopR (yopR), found in Bacillus subtilis (strain 168).